Reading from the N-terminus, the 552-residue chain is CTP synthase (552 aa).

Residues 1 to 270 form an amidoligase domain region; sequence MTKYVFVTGG…DRIICEELKL (270 aa). Ser13 provides a ligand contact to CTP. Ser13 lines the UTP pocket. Residues 14 to 19 and Asp71 each bind ATP; that span reads SLGKGI. Positions 71 and 144 each coordinate Mg(2+). CTP-binding positions include 151–153, 191–196, and Lys227; these read DIE and KTKPTQ. Residues 191–196 and Lys227 contribute to the UTP site; that span reads KTKPTQ. Positions 295 to 547 constitute a Glutamine amidotransferase type-1 domain; that stretch reads TIGMVGKYVD…VEAAFANKQA (253 aa). An L-glutamine-binding site is contributed by Gly356. Residue Cys383 is the Nucleophile; for glutamine hydrolysis of the active site. Residues 384–387, Glu407, and Arg473 each bind L-glutamine; that span reads LGMQ. Catalysis depends on residues His520 and Glu522.

Belongs to the CTP synthase family. As to quaternary structure, homotetramer.

It catalyses the reaction UTP + L-glutamine + ATP + H2O = CTP + L-glutamate + ADP + phosphate + 2 H(+). The enzyme catalyses L-glutamine + H2O = L-glutamate + NH4(+). The catalysed reaction is UTP + NH4(+) + ATP = CTP + ADP + phosphate + 2 H(+). It participates in pyrimidine metabolism; CTP biosynthesis via de novo pathway; CTP from UDP: step 2/2. Allosterically activated by GTP, when glutamine is the substrate; GTP has no effect on the reaction when ammonia is the substrate. The allosteric effector GTP functions by stabilizing the protein conformation that binds the tetrahedral intermediate(s) formed during glutamine hydrolysis. Inhibited by the product CTP, via allosteric rather than competitive inhibition. Catalyzes the ATP-dependent amination of UTP to CTP with either L-glutamine or ammonia as the source of nitrogen. Regulates intracellular CTP levels through interactions with the four ribonucleotide triphosphates. The polypeptide is CTP synthase (Burkholderia ambifaria (strain ATCC BAA-244 / DSM 16087 / CCUG 44356 / LMG 19182 / AMMD) (Burkholderia cepacia (strain AMMD))).